Here is a 295-residue protein sequence, read N- to C-terminus: MCIGKVTSSWRSAASIILACKTTRRVLMLKRGTTAKFMPNTMVFPGGVVDKTDAKLGDEFRIAAVRELFEESGVLSTKNGWQTSANNPDMTSLKADIVNDTSKFEQLSGTICADNLIEWDTFITPANYPRRFLTKFYLMLVDDEPAIDLCTSEMSEYNWIEPKECVDEAYAGKYALPPPQVYELTRLSQVKDWDLCEKYGNVKKPICPQPIKTIGENLITNCFPGDYMYIDENSLQQPLRQMSADRVTVDPTQPTHRATYYSEPMYGKVRLYQHLLKPADIAAFHQFDTHSKDLL.

In terms of domain architecture, Nudix hydrolase spans 9 to 182; that stretch reads SWRSAASIIL…KYALPPPQVY (174 aa). The Nudix box motif lies at 52–73; the sequence is TDAKLGDEFRIAAVRELFEESG. Glutamate 67 and glutamate 71 together coordinate Mg(2+).

Belongs to the Nudix hydrolase family. The cofactor is Mg(2+). Mn(2+) is required as a cofactor.

Probably mediates the hydrolysis of some nucleoside diphosphate derivatives. This Caenorhabditis elegans protein is Putative nudix hydrolase 7 (ndx-7).